We begin with the raw amino-acid sequence, 91 residues long: MILIYDINTEDNDGKRRLVKIMKTSRKYLSHVQKSVFEGDITEGQISLLKKEIMAIVNMKKDFVIIYSLRDGVKLNREILTDTPDPTDNFL.

Residue D6 coordinates Mg(2+).

It belongs to the CRISPR-associated endoribonuclease Cas2 protein family. Homodimer, forms a heterotetramer with a Cas1 homodimer. Requires Mg(2+) as cofactor.

CRISPR (clustered regularly interspaced short palindromic repeat), is an adaptive immune system that provides protection against mobile genetic elements (viruses, transposable elements and conjugative plasmids). CRISPR clusters contain sequences complementary to antecedent mobile elements and target invading nucleic acids. CRISPR clusters are transcribed and processed into CRISPR RNA (crRNA). Functions as a ssRNA-specific endoribonuclease. Involved in the integration of spacer DNA into the CRISPR cassette. The sequence is that of CRISPR-associated endoribonuclease Cas2 2 from Moorella thermoacetica (strain ATCC 39073 / JCM 9320).